The primary structure comprises 311 residues: Cytosolic Fe-S cluster assembly factor Nubp1 homolog (311 aa).

The tract at residues 1 to 21 (MQAPPPEHCPGVESEDAGKGS) is disordered. [4Fe-4S] cluster-binding residues include Cys-9, Cys-23, Cys-26, and Cys-32. 63-70 (GKGGVGKS) provides a ligand contact to ATP. 2 residues coordinate [4Fe-4S] cluster: Cys-240 and Cys-243.

Belongs to the Mrp/NBP35 ATP-binding proteins family. NUBP1/NBP35 subfamily. In terms of assembly, heterotetramer of 2 Nubp1 and 2 Nubp2 chains. The cofactor is [4Fe-4S] cluster.

Its subcellular location is the cytoplasm. Component of the cytosolic iron-sulfur (Fe/S) protein assembly (CIA) machinery. Required for maturation of extramitochondrial Fe-S proteins. The Nubp1-Nubp2 heterotetramer forms a Fe-S scaffold complex, mediating the de novo assembly of an Fe-S cluster and its transfer to target apoproteins. The sequence is that of Cytosolic Fe-S cluster assembly factor Nubp1 homolog from Drosophila sechellia (Fruit fly).